The sequence spans 158 residues: NADH-quinone oxidoreductase subunit B (158 aa).

[4Fe-4S] cluster is bound by residues Cys37, Cys38, Cys102, and Cys132.

The protein belongs to the complex I 20 kDa subunit family. NDH-1 is composed of 14 different subunits. Subunits NuoB, C, D, E, F, and G constitute the peripheral sector of the complex. [4Fe-4S] cluster serves as cofactor.

Its subcellular location is the cell inner membrane. It catalyses the reaction a quinone + NADH + 5 H(+)(in) = a quinol + NAD(+) + 4 H(+)(out). Functionally, NDH-1 shuttles electrons from NADH, via FMN and iron-sulfur (Fe-S) centers, to quinones in the respiratory chain. Couples the redox reaction to proton translocation (for every two electrons transferred, four hydrogen ions are translocated across the cytoplasmic membrane), and thus conserves the redox energy in a proton gradient. This chain is NADH-quinone oxidoreductase subunit B, found in Alkalilimnicola ehrlichii (strain ATCC BAA-1101 / DSM 17681 / MLHE-1).